A 296-amino-acid polypeptide reads, in one-letter code: Glycine--tRNA ligase alpha subunit (296 aa).

It belongs to the class-II aminoacyl-tRNA synthetase family. Tetramer of two alpha and two beta subunits.

Its subcellular location is the cytoplasm. It carries out the reaction tRNA(Gly) + glycine + ATP = glycyl-tRNA(Gly) + AMP + diphosphate. This chain is Glycine--tRNA ligase alpha subunit, found in Synechococcus sp. (strain WH7803).